We begin with the raw amino-acid sequence, 256 residues long: Hydroxyacylglutathione hydrolase (256 aa).

Zn(2+) contacts are provided by histidine 58, histidine 60, aspartate 62, histidine 63, histidine 116, aspartate 135, and histidine 173.

This sequence belongs to the metallo-beta-lactamase superfamily. Glyoxalase II family. In terms of assembly, monomer. The cofactor is Zn(2+).

The enzyme catalyses an S-(2-hydroxyacyl)glutathione + H2O = a 2-hydroxy carboxylate + glutathione + H(+). It functions in the pathway secondary metabolite metabolism; methylglyoxal degradation; (R)-lactate from methylglyoxal: step 2/2. Its function is as follows. Thiolesterase that catalyzes the hydrolysis of S-D-lactoyl-glutathione to form glutathione and D-lactic acid. This Hyphomonas neptunium (strain ATCC 15444) protein is Hydroxyacylglutathione hydrolase.